We begin with the raw amino-acid sequence, 145 residues long: Ornithine decarboxylase antizyme (145 aa).

The protein belongs to the ODC antizyme family. As to quaternary structure, interacts with ODC1 and thereby sterically blocks ODC homodimerization.

In terms of biological role, ornithine decarboxylase (ODC) antizyme protein that negatively regulates ODC activity and intracellular polyamine biosynthesis and uptake in response to increased intracellular polyamine levels. Binds to ODC monomers, inhibiting the assembly of the functional ODC homodimer, and targets the monomers for ubiquitin-independent proteolytic destruction by the 26S proteasome. The sequence is that of Ornithine decarboxylase antizyme from Onchocerca volvulus.